The following is a 41-amino-acid chain: MKIKNSLKSLKTRHRENRLVRRKGRVYIINKLNPRFKARQG.

It belongs to the bacterial ribosomal protein bL36 family.

This chain is Large ribosomal subunit protein bL36, found in Sinorhizobium medicae (strain WSM419) (Ensifer medicae).